The primary structure comprises 178 residues: Crossover junction endodeoxyribonuclease RuvC (178 aa).

Catalysis depends on residues D14, E73, and D145. Mg(2+) contacts are provided by D14, E73, and D145.

The protein belongs to the RuvC family. Homodimer which binds Holliday junction (HJ) DNA. The HJ becomes 2-fold symmetrical on binding to RuvC with unstacked arms; it has a different conformation from HJ DNA in complex with RuvA. In the full resolvosome a probable DNA-RuvA(4)-RuvB(12)-RuvC(2) complex forms which resolves the HJ. Requires Mg(2+) as cofactor.

It is found in the cytoplasm. The catalysed reaction is Endonucleolytic cleavage at a junction such as a reciprocal single-stranded crossover between two homologous DNA duplexes (Holliday junction).. Its function is as follows. The RuvA-RuvB-RuvC complex processes Holliday junction (HJ) DNA during genetic recombination and DNA repair. Endonuclease that resolves HJ intermediates. Cleaves cruciform DNA by making single-stranded nicks across the HJ at symmetrical positions within the homologous arms, yielding a 5'-phosphate and a 3'-hydroxyl group; requires a central core of homology in the junction. The consensus cleavage sequence is 5'-(A/T)TT(C/G)-3'. Cleavage occurs on the 3'-side of the TT dinucleotide at the point of strand exchange. HJ branch migration catalyzed by RuvA-RuvB allows RuvC to scan DNA until it finds its consensus sequence, where it cleaves and resolves the cruciform DNA. This chain is Crossover junction endodeoxyribonuclease RuvC, found in Nitrosomonas eutropha (strain DSM 101675 / C91 / Nm57).